A 113-amino-acid polypeptide reads, in one-letter code: Sperm-associated antigen 11B (113 aa).

Positions 1-26 (MIPRLLPFFASLLFAALLFPGLSNAS) are cleaved as a signal peptide. 3 disulfide bridges follow: Cys-80–Cys-108, Cys-87–Cys-101, and Cys-91–Cys-109.

The protein belongs to the beta-defensin family.

It localises to the secreted. In terms of biological role, has antimicrobial activity against E.coli. Plays a role in the defense response in the male reproductive tract, contributing to sperm maturation, storage and protection. This chain is Sperm-associated antigen 11B, found in Mus musculus (Mouse).